The sequence spans 49 residues: Small, acid-soluble spore protein O (49 aa).

The segment at 24 to 49 (GYNEEFSNEPLTEAQRQNNKKRKKNQ) is disordered.

The protein belongs to the SspO family.

The protein resides in the spore core. This Geobacillus kaustophilus (strain HTA426) protein is Small, acid-soluble spore protein O.